The following is a 1021-amino-acid chain: Immunoglobulin superfamily member 2 (1021 aa).

The signal sequence occupies residues 1 to 20 (MAGISYVASFFLLLTKLSIG). Over 21 to 954 (QREVTVQKGP…LPSRICSSAP (934 aa)) the chain is Extracellular. Ig-like C2-type domains lie at 22–139 (REVT…AKTN), 144–265 (PDTL…WMFI), 279–389 (PAVK…RTGS), 408–525 (PAAR…RDLS), 541–651 (LQVS…NSLY), 656–794 (PRAS…WHKL), and 808–925 (PTGS…KWIN). 2 disulfides stabilise this stretch: cysteine 43-cysteine 121 and cysteine 168-cysteine 249. N-linked (GlcNAc...) asparagine glycosylation is present at asparagine 44. The EWI motif motif lies at 253 to 255 (EWI). 5 disulfide bridges follow: cysteine 304-cysteine 377, cysteine 434-cysteine 511, cysteine 562-cysteine 640, cysteine 697-cysteine 778, and cysteine 834-cysteine 909. The N-linked (GlcNAc...) asparagine glycan is linked to asparagine 322. The chain crosses the membrane as a helical span at residues 955–975 (LLYFLFICPFVLLLLLLISLL). The Cytoplasmic portion of the chain corresponds to 976–1021 (CLYWKARKLSTLRSNTRKEKALWVDLKEAGGVTTNRREDEEEDEGN).

Post-translationally, N-glycosylated. As to expression, expressed in lung, thymus and small intestine. Detected in cutaneous dendritic cells, activated T-cells, monocytes and granulocytes as well as with epithelial cells with dendritic morphology. Expressed in some leukemic cells, the CD4(+) CD56(+) blastic tumor cells, as well as in Langerhans cells from LCH (Langerhans cell histiocytosis) patients.

It localises to the membrane. Functionally, plays a role as inhibitor of T-cells proliferation induced by CD3. Inhibits expression of IL2RA on activated T-cells and secretion of IL2. Inhibits tyrosine kinases that are required for IL2 production and cellular proliferation. Inhibits phospholipase C-gamma-1/PLCG1 phosphorylation and subsequent CD3-induced changes in intracellular free calcium. Prevents nuclear translocation of nuclear factor of activated T-cell to the nucleus. Plays a role in the inhibition of T-cell proliferation via IL10 secretion by cutaneous dendritic cells. May be a marker of CD4(+) CD56(+) leukemic tumor cells. The sequence is that of Immunoglobulin superfamily member 2 (CD101) from Homo sapiens (Human).